The sequence spans 179 residues: ATP synthase subunit delta 1 (179 aa).

The protein belongs to the ATPase delta chain family. As to quaternary structure, F-type ATPases have 2 components, F(1) - the catalytic core - and F(0) - the membrane proton channel. F(1) has five subunits: alpha(3), beta(3), gamma(1), delta(1), epsilon(1). F(0) has three main subunits: a(1), b(2) and c(10-14). The alpha and beta chains form an alternating ring which encloses part of the gamma chain. F(1) is attached to F(0) by a central stalk formed by the gamma and epsilon chains, while a peripheral stalk is formed by the delta and b chains.

Its subcellular location is the cell inner membrane. F(1)F(0) ATP synthase produces ATP from ADP in the presence of a proton or sodium gradient. F-type ATPases consist of two structural domains, F(1) containing the extramembraneous catalytic core and F(0) containing the membrane proton channel, linked together by a central stalk and a peripheral stalk. During catalysis, ATP synthesis in the catalytic domain of F(1) is coupled via a rotary mechanism of the central stalk subunits to proton translocation. Functionally, this protein is part of the stalk that links CF(0) to CF(1). It either transmits conformational changes from CF(0) to CF(1) or is implicated in proton conduction. In Syntrophotalea carbinolica (strain DSM 2380 / NBRC 103641 / GraBd1) (Pelobacter carbinolicus), this protein is ATP synthase subunit delta 1.